A 408-amino-acid chain; its full sequence is Imidazolonepropionase (408 aa).

His-73 and His-75 together coordinate Fe(3+). Residues His-73 and His-75 each contribute to the Zn(2+) site. 4-imidazolone-5-propanoate is bound by residues Arg-82, Tyr-145, and His-178. Residue Tyr-145 coordinates N-formimidoyl-L-glutamate. His-243 lines the Fe(3+) pocket. His-243 contacts Zn(2+). Position 246 (Gln-246) interacts with 4-imidazolone-5-propanoate. Asp-318 is a Fe(3+) binding site. Asp-318 contributes to the Zn(2+) binding site. Asn-320 and Gly-322 together coordinate N-formimidoyl-L-glutamate. Ser-323 serves as a coordination point for 4-imidazolone-5-propanoate.

It belongs to the metallo-dependent hydrolases superfamily. HutI family. It depends on Zn(2+) as a cofactor. Requires Fe(3+) as cofactor.

The protein resides in the cytoplasm. The enzyme catalyses 4-imidazolone-5-propanoate + H2O = N-formimidoyl-L-glutamate. Its pathway is amino-acid degradation; L-histidine degradation into L-glutamate; N-formimidoyl-L-glutamate from L-histidine: step 3/3. Catalyzes the hydrolytic cleavage of the carbon-nitrogen bond in imidazolone-5-propanoate to yield N-formimidoyl-L-glutamate. It is the third step in the universal histidine degradation pathway. In Shewanella loihica (strain ATCC BAA-1088 / PV-4), this protein is Imidazolonepropionase.